A 395-amino-acid polypeptide reads, in one-letter code: Elongation factor Tu (395 aa).

Positions 10-204 (KSHVNIGTIG…AVDEYIPTPE (195 aa)) constitute a tr-type G domain. The G1 stretch occupies residues 19-26 (GHVDHGKT). 19 to 26 (GHVDHGKT) is a GTP binding site. T26 lines the Mg(2+) pocket. The segment at 60-64 (GITIN) is G2. Residues 81–84 (DCPG) form a G3 region. Residues 81-85 (DCPGH) and 136-139 (NKMD) each bind GTP. The interval 136 to 139 (NKMD) is G4. Positions 174-176 (SAL) are G5.

Belongs to the TRAFAC class translation factor GTPase superfamily. Classic translation factor GTPase family. EF-Tu/EF-1A subfamily. Monomer.

Its subcellular location is the cytoplasm. The enzyme catalyses GTP + H2O = GDP + phosphate + H(+). In terms of biological role, GTP hydrolase that promotes the GTP-dependent binding of aminoacyl-tRNA to the A-site of ribosomes during protein biosynthesis. This is Elongation factor Tu from Enterococcus faecalis (strain ATCC 700802 / V583).